Here is a 76-residue protein sequence, read N- to C-terminus: Acyl carrier protein (76 aa).

Positions 1 to 74 (MEERIKEIIA…DVINYIKEKK (74 aa)) constitute a Carrier domain. The residue at position 34 (Ser34) is an O-(pantetheine 4'-phosphoryl)serine.

It belongs to the acyl carrier protein (ACP) family. In terms of processing, 4'-phosphopantetheine is transferred from CoA to a specific serine of apo-ACP by AcpS. This modification is essential for activity because fatty acids are bound in thioester linkage to the sulfhydryl of the prosthetic group.

It localises to the cytoplasm. It participates in lipid metabolism; fatty acid biosynthesis. Functionally, carrier of the growing fatty acid chain in fatty acid biosynthesis. The sequence is that of Acyl carrier protein from Persephonella marina (strain DSM 14350 / EX-H1).